The following is a 265-amino-acid chain: Cytochrome c oxidase subunit 3 (265 aa).

Helical transmembrane passes span 41–61, 85–105, 137–157, 162–182, 200–220, and 245–265; these read GGAT…FVWW, GFIL…WAFF, TLIL…ILAG, AVYA…FQGM, FFLA…FLIV, and WHFV…WGGI.

The protein belongs to the cytochrome c oxidase subunit 3 family. In terms of assembly, component of the cytochrome c oxidase (complex IV, CIV), a multisubunit enzyme composed of a catalytic core of 3 subunits and several supernumerary subunits. The complex exists as a monomer or a dimer and forms supercomplexes (SCs) in the inner mitochondrial membrane with ubiquinol-cytochrome c oxidoreductase (cytochrome b-c1 complex, complex III, CIII).

Its subcellular location is the mitochondrion inner membrane. It carries out the reaction 4 Fe(II)-[cytochrome c] + O2 + 8 H(+)(in) = 4 Fe(III)-[cytochrome c] + 2 H2O + 4 H(+)(out). In terms of biological role, component of the cytochrome c oxidase, the last enzyme in the mitochondrial electron transport chain which drives oxidative phosphorylation. The respiratory chain contains 3 multisubunit complexes succinate dehydrogenase (complex II, CII), ubiquinol-cytochrome c oxidoreductase (cytochrome b-c1 complex, complex III, CIII) and cytochrome c oxidase (complex IV, CIV), that cooperate to transfer electrons derived from NADH and succinate to molecular oxygen, creating an electrochemical gradient over the inner membrane that drives transmembrane transport and the ATP synthase. Cytochrome c oxidase is the component of the respiratory chain that catalyzes the reduction of oxygen to water. Electrons originating from reduced cytochrome c in the intermembrane space (IMS) are transferred via the dinuclear copper A center (CU(A)) of subunit 2 and heme A of subunit 1 to the active site in subunit 1, a binuclear center (BNC) formed by heme A3 and copper B (CU(B)). The BNC reduces molecular oxygen to 2 water molecules using 4 electrons from cytochrome c in the IMS and 4 protons from the mitochondrial matrix. The protein is Cytochrome c oxidase subunit 3 (COX3) of Triticum aestivum (Wheat).